Consider the following 373-residue polypeptide: MASQAHSLSYSGCNFLRQRLVLSTLSGRPVKIRKIRARDDNPGLRDFEASFIRLLDKVTNGSRIEINQTGTTLYYQPGLLYGGSMEHDCSVLRGIGYYLESLLCLAPFMKHPLRIVLRGVTNDQVDPSVDVLKATALPLLKQFGIDGESFELKVVRRGMPPGGGGEVFFSCPVRKVLKPIQLIDPGKIKRIRGMAYSVRVSPQMANRIVDSARSILNKFIPDIYIYTDHMKGINSGKSPGFGLSLVAETTNGTFLSAELASNPQGQGAAMLPEDLGRNCARLLLEEIYRGGCVDSTNQSLALLLMTLGQQDVSKVLLGPLSPYTIEFLRHLKSFFQIMFKIETKPCGEELKGGDKVLMTCVGIGFSNLSKTLK.

This sequence belongs to the RNA 3'-terminal cyclase family. Type 2 subfamily. In terms of assembly, part of the small subunit (SSU) processome, composed of more than 70 proteins and the RNA chaperone small nucleolar RNA (snoRNA) U3. Interacts with BMS1.

It is found in the nucleus. The protein resides in the nucleolus. As part of the small subunit (SSU) processome, it plays a role in 40S-ribosomal-subunit biogenesis in the early pre-rRNA processing steps at sites A0, A1 and A2 that are required for proper maturation of the 18S RNA. Activates BMS1 by promoting GDP/GTP exchange. Does not have cyclase activity. The protein is RNA 3'-terminal phosphate cyclase-like protein (RCL1) of Bos taurus (Bovine).